We begin with the raw amino-acid sequence, 227 residues long: Cytochrome c oxidase subunit 2 (227 aa).

Residues 1–14 (MAYPLQLGLQDATS) lie on the Mitochondrial intermembrane side of the membrane. Residues 15–45 (PIMEELMNFHDHTLMIVFLISSLVLYVISSM) form a helical membrane-spanning segment. The Mitochondrial matrix portion of the chain corresponds to 46-59 (LTTKLTHTSTMDAQ). The helical transmembrane segment at 60–87 (EVETIWTILPAVILIMIALPSLRILYMM) threads the bilayer. At 88 to 227 (DEINNPVLTV…NFETWSVSMI (140 aa)) the chain is on the mitochondrial intermembrane side. Cu cation is bound by residues histidine 161, cysteine 196, glutamate 198, cysteine 200, histidine 204, and methionine 207. Glutamate 198 is a binding site for Mg(2+).

The protein belongs to the cytochrome c oxidase subunit 2 family. As to quaternary structure, component of the cytochrome c oxidase (complex IV, CIV), a multisubunit enzyme composed of 14 subunits. The complex is composed of a catalytic core of 3 subunits MT-CO1, MT-CO2 and MT-CO3, encoded in the mitochondrial DNA, and 11 supernumerary subunits COX4I, COX5A, COX5B, COX6A, COX6B, COX6C, COX7A, COX7B, COX7C, COX8 and NDUFA4, which are encoded in the nuclear genome. The complex exists as a monomer or a dimer and forms supercomplexes (SCs) in the inner mitochondrial membrane with NADH-ubiquinone oxidoreductase (complex I, CI) and ubiquinol-cytochrome c oxidoreductase (cytochrome b-c1 complex, complex III, CIII), resulting in different assemblies (supercomplex SCI(1)III(2)IV(1) and megacomplex MCI(2)III(2)IV(2)). Found in a complex with TMEM177, COA6, COX18, COX20, SCO1 and SCO2. Interacts with TMEM177 in a COX20-dependent manner. Interacts with COX20. Interacts with COX16. Cu cation serves as cofactor.

It localises to the mitochondrion inner membrane. The catalysed reaction is 4 Fe(II)-[cytochrome c] + O2 + 8 H(+)(in) = 4 Fe(III)-[cytochrome c] + 2 H2O + 4 H(+)(out). In terms of biological role, component of the cytochrome c oxidase, the last enzyme in the mitochondrial electron transport chain which drives oxidative phosphorylation. The respiratory chain contains 3 multisubunit complexes succinate dehydrogenase (complex II, CII), ubiquinol-cytochrome c oxidoreductase (cytochrome b-c1 complex, complex III, CIII) and cytochrome c oxidase (complex IV, CIV), that cooperate to transfer electrons derived from NADH and succinate to molecular oxygen, creating an electrochemical gradient over the inner membrane that drives transmembrane transport and the ATP synthase. Cytochrome c oxidase is the component of the respiratory chain that catalyzes the reduction of oxygen to water. Electrons originating from reduced cytochrome c in the intermembrane space (IMS) are transferred via the dinuclear copper A center (CU(A)) of subunit 2 and heme A of subunit 1 to the active site in subunit 1, a binuclear center (BNC) formed by heme A3 and copper B (CU(B)). The BNC reduces molecular oxygen to 2 water molecules using 4 electrons from cytochrome c in the IMS and 4 protons from the mitochondrial matrix. The polypeptide is Cytochrome c oxidase subunit 2 (MT-CO2) (Malacothrix typica (Long-eared mouse)).